The chain runs to 384 residues: Putative D-galactosamine-6-phosphate deaminase AgaS (384 aa).

SIS domains lie at 45–197 (LEPL…SQTF) and 215–364 (SEGV…PDTP).

This sequence belongs to the SIS family. AgaS subfamily.

The catalysed reaction is D-galactosamine 6-phosphate + H2O = D-tagatopyranose 1-phosphate + NH4(+). In terms of biological role, catalyzes the isomerization-deamination of galactosamine 6-phosphate to form tagatofuranose 6-phosphate and ammonium ion. The chain is Putative D-galactosamine-6-phosphate deaminase AgaS (agaS) from Escherichia coli (strain K12).